Here is a 483-residue protein sequence, read N- to C-terminus: Glutamyl-tRNA(Gln) amidotransferase subunit A (483 aa).

Active-site charge relay system residues include Lys-76 and Ser-151. Ser-175 (acyl-ester intermediate) is an active-site residue.

The protein belongs to the amidase family. GatA subfamily. As to quaternary structure, heterotrimer of A, B and C subunits.

The catalysed reaction is L-glutamyl-tRNA(Gln) + L-glutamine + ATP + H2O = L-glutaminyl-tRNA(Gln) + L-glutamate + ADP + phosphate + H(+). Functionally, allows the formation of correctly charged Gln-tRNA(Gln) through the transamidation of misacylated Glu-tRNA(Gln) in organisms which lack glutaminyl-tRNA synthetase. The reaction takes place in the presence of glutamine and ATP through an activated gamma-phospho-Glu-tRNA(Gln). The polypeptide is Glutamyl-tRNA(Gln) amidotransferase subunit A (Pseudomonas fluorescens (strain ATCC BAA-477 / NRRL B-23932 / Pf-5)).